Reading from the N-terminus, the 606-residue chain is Putative helicase 172L (606 aa).

Residues G59 to K264 form the Helicase ATP-binding domain. Residue L72 to T79 participates in ATP binding. Residues Y437–I586 form the Helicase C-terminal domain.

It belongs to the SNF2/RAD54 helicase family.

This Invertebrate iridescent virus 6 (IIV-6) protein is Putative helicase 172L.